The sequence spans 1026 residues: Beta-galactosidase (1026 aa).

E458 (proton donor) is an active-site residue. Catalysis depends on E546, which acts as the Nucleophile.

The protein belongs to the glycosyl hydrolase 2 family.

The enzyme catalyses Hydrolysis of terminal non-reducing beta-D-galactose residues in beta-D-galactosides.. The polypeptide is Beta-galactosidase (lacZ) (Streptococcus thermophilus).